A 144-amino-acid polypeptide reads, in one-letter code: Probable low molecular weight protein-tyrosine-phosphatase AmsI (144 aa).

Catalysis depends on cysteine 9, which acts as the Nucleophile. Residue arginine 15 is part of the active site. Catalysis depends on aspartate 115, which acts as the Proton donor.

Belongs to the low molecular weight phosphotyrosine protein phosphatase family.

It carries out the reaction O-phospho-L-tyrosyl-[protein] + H2O = L-tyrosyl-[protein] + phosphate. In terms of biological role, may function as a phosphatase required for amylovoran (an exopolysaccharide that functions as a virulence factor) production. This is Probable low molecular weight protein-tyrosine-phosphatase AmsI (amsI) from Erwinia amylovora (Fire blight bacteria).